Consider the following 134-residue polypeptide: Terepressin/terephysin (134 aa).

A signal peptide spans 1–33 (MKCSVLQMSRLSWTACVLLLPLLLLTLQGGVQG). A disulfide bridge links cysteine 34 with cysteine 39. Positions 44–50 (KRAVDSV) are excised as a propeptide. 7 disulfides stabilise this stretch: cysteine 56-cysteine 100, cysteine 59-cysteine 73, cysteine 67-cysteine 90, cysteine 74-cysteine 80, cysteine 107-cysteine 121, cysteine 115-cysteine 133, and cysteine 122-cysteine 127.

Belongs to the vasopressin/oxytocin family. In terms of processing, contains 7 disulfide bonds. In terms of tissue distribution, expressed by the venom duct.

The protein resides in the secreted. In Terebra anilis (Auger snail), this protein is Terepressin/terephysin.